A 264-amino-acid chain; its full sequence is NAD kinase 1 (264 aa).

Catalysis depends on D45, which acts as the Proton acceptor. Residues 45–46, 122–123, R148, D150, 161–166, and A185 contribute to the NAD(+) site; these read DG, NE, and TAYNKS.

This sequence belongs to the NAD kinase family. A divalent metal cation is required as a cofactor.

It localises to the cytoplasm. It carries out the reaction NAD(+) + ATP = ADP + NADP(+) + H(+). In terms of biological role, involved in the regulation of the intracellular balance of NAD and NADP, and is a key enzyme in the biosynthesis of NADP. Catalyzes specifically the phosphorylation on 2'-hydroxyl of the adenosine moiety of NAD to yield NADP. This Listeria monocytogenes serotype 4b (strain F2365) protein is NAD kinase 1.